Here is a 233-residue protein sequence, read N- to C-terminus: Preprocaerulein type-4 (233 aa).

Positions 1–26 (MFKGILLCVLFAVLSANPLSQPEGFA) are cleaved as a signal peptide. The propeptide occupies 27-72 (DEERDVRGLASLLGKALKATLKIGTHFLGGAPQQREANDERRFADG). A Pyrrolidone carboxylic acid modification is found at glutamine 73. Sulfotyrosine is present on tyrosine 76. A Phenylalanine amide modification is found at phenylalanine 82. A propeptide spanning residues 86–87 (DG) is cleaved from the precursor. Pyrrolidone carboxylic acid is present on glutamine 88. The residue at position 91 (tyrosine 91) is a Sulfotyrosine. Phenylalanine 97 bears the Phenylalanine amide mark. The propeptide occupies 101 to 151 (DDEDDVHERDVRGFGSFLGKALKAALKIGANALGGAPQQREANDERRFADG). Residue glutamine 152 is modified to Pyrrolidone carboxylic acid. At tyrosine 155 the chain carries Sulfotyrosine. Phenylalanine 161 bears the Phenylalanine amide mark. A propeptide spanning residues 165–215 (DDEDDVNERDVRGFGSFLGKALKAALKIGANALGGSPQQREANDERRFADG) is cleaved from the precursor. Positions 197-233 (LGGSPQQREANDERRFADGQQDYTGWMDFGRRNGEDD) are disordered. Position 216 is a pyrrolidone carboxylic acid (glutamine 216). Tyrosine 219 bears the Sulfotyrosine mark. A Phenylalanine amide modification is found at phenylalanine 225. A propeptide spanning residues 229 to 233 (NGEDD) is cleaved from the precursor.

The protein belongs to the gastrin/cholecystokinin family. Expressed by the skin glands.

It localises to the secreted. Its function is as follows. The pharmacological activities of caerulein are quite similar to the physiological activities of gastrin and related peptides. This Xenopus laevis (African clawed frog) protein is Preprocaerulein type-4.